A 593-amino-acid polypeptide reads, in one-letter code: Methionine--tRNA ligase, mitochondrial (593 aa).

The N-terminal 29 residues, 1 to 29 (MLRTSVLRLLGRTGASRLSLLEDFGPRYY), are a transit peptide targeting the mitochondrion. Positions 52–62 (FYVNAAPHIGH) match the 'HIGH' region motif. A 'KMSKS' region motif is present at residues 347–351 (KMSKS). Lysine 350 contacts ATP.

Belongs to the class-I aminoacyl-tRNA synthetase family.

The protein localises to the mitochondrion matrix. The enzyme catalyses tRNA(Met) + L-methionine + ATP = L-methionyl-tRNA(Met) + AMP + diphosphate. This is Methionine--tRNA ligase, mitochondrial (MARS2) from Homo sapiens (Human).